A 344-amino-acid chain; its full sequence is L-rhamnose-proton symporter (344 aa).

Helical transmembrane passes span 4 to 24, 38 to 58, 68 to 88, 101 to 121, 137 to 157, 175 to 195, 214 to 234, 259 to 279, 290 to 310, and 323 to 343; these read AITM…CFYA, WSVG…ALLL, FSLS…IGNI, MGIG…TPII, TLLG…AGQL, LVLA…MNAA, LPSY…FCFI, VLLS…YAWG, ISWM…GLVL, and VLSL…IGMA.

Belongs to the L-rhamnose transporter (TC 2.A.7.6) family.

The protein localises to the cell inner membrane. It catalyses the reaction L-rhamnopyranose(in) + H(+)(in) = L-rhamnopyranose(out) + H(+)(out). Its function is as follows. Uptake of L-rhamnose across the cytoplasmic membrane with the concomitant transport of protons into the cell (symport system). The polypeptide is L-rhamnose-proton symporter (Escherichia coli (strain 55989 / EAEC)).